A 316-amino-acid polypeptide reads, in one-letter code: Methionyl-tRNA formyltransferase (316 aa).

109–112 is a (6S)-5,6,7,8-tetrahydrofolate binding site; that stretch reads SLLP.

Belongs to the Fmt family.

The enzyme catalyses L-methionyl-tRNA(fMet) + (6R)-10-formyltetrahydrofolate = N-formyl-L-methionyl-tRNA(fMet) + (6S)-5,6,7,8-tetrahydrofolate + H(+). Its function is as follows. Attaches a formyl group to the free amino group of methionyl-tRNA(fMet). The formyl group appears to play a dual role in the initiator identity of N-formylmethionyl-tRNA by promoting its recognition by IF2 and preventing the misappropriation of this tRNA by the elongation apparatus. The chain is Methionyl-tRNA formyltransferase from Idiomarina loihiensis (strain ATCC BAA-735 / DSM 15497 / L2-TR).